A 90-amino-acid chain; its full sequence is MTRTVLCRKYKQELPGLDRAPYPGPKGEDIFANVSKQAWDEWQKHQTMLINERRLNMMNAEDRKFLQTEMDKFLSGEEYAQAEGYVPPSE.

It belongs to the Fe(2+)-trafficking protein family.

Functionally, could be a mediator in iron transactions between iron acquisition and iron-requiring processes, such as synthesis and/or repair of Fe-S clusters in biosynthetic enzymes. This Ectopseudomonas mendocina (strain ymp) (Pseudomonas mendocina) protein is Probable Fe(2+)-trafficking protein.